Consider the following 705-residue polypeptide: Polyphosphate kinase (705 aa).

ATP is bound at residue Asn58. Residues Arg389 and Arg419 each coordinate Mg(2+). His449 serves as the catalytic Phosphohistidine intermediate. Residues Tyr482, Arg578, and His606 each coordinate ATP.

It belongs to the polyphosphate kinase 1 (PPK1) family. Mg(2+) is required as a cofactor. Post-translationally, an intermediate of this reaction is the autophosphorylated ppk in which a phosphate is covalently linked to a histidine residue through a N-P bond.

The catalysed reaction is [phosphate](n) + ATP = [phosphate](n+1) + ADP. In terms of biological role, catalyzes the reversible transfer of the terminal phosphate of ATP to form a long-chain polyphosphate (polyP). This chain is Polyphosphate kinase, found in Halalkalibacterium halodurans (strain ATCC BAA-125 / DSM 18197 / FERM 7344 / JCM 9153 / C-125) (Bacillus halodurans).